The sequence spans 1102 residues: Probable ubiquitin-conjugating enzyme E2 23 (1102 aa).

6 disordered regions span residues 1 to 20 (MEHEQDDPGTSTNVGVDSSV), 25 to 111 (ASLS…DGNY), 396 to 418 (LPKVTSDDPPQRNPSVSKEPVHE), 579 to 602 (SPGNSFEEATQQDNGYQDSESHQE), 661 to 710 (DESV…DIYA), and 760 to 800 (QAES…KNIL). Residues 31 to 44 (DSEHPNIYRQDIVK) show a composition bias toward basic and acidic residues. Acidic residues predominate over residues 59 to 88 (GDSDSDSDISDEEEDDDDDEDNDDDDEDVE). Over residues 579–596 (SPGNSFEEATQQDNGYQD) the composition is skewed to polar residues. Polar residues predominate over residues 779–800 (SKVNVTDNCESKGTQANAKNIL). Positions 850-1010 (QWFKKVDQDW…TFLLNCKTMM (161 aa)) constitute a UBC core domain. Cys936 (glycyl thioester intermediate) is an active-site residue.

Belongs to the ubiquitin-conjugating enzyme family.

It carries out the reaction S-ubiquitinyl-[E1 ubiquitin-activating enzyme]-L-cysteine + [E2 ubiquitin-conjugating enzyme]-L-cysteine = [E1 ubiquitin-activating enzyme]-L-cysteine + S-ubiquitinyl-[E2 ubiquitin-conjugating enzyme]-L-cysteine.. Its pathway is protein modification; protein ubiquitination. Its function is as follows. Accepts the ubiquitin from the E1 complex and catalyzes its covalent attachment to other proteins. The chain is Probable ubiquitin-conjugating enzyme E2 23 (UBC23) from Arabidopsis thaliana (Mouse-ear cress).